The following is a 522-amino-acid chain: E3 ubiquitin-protein ligase DMA2 (522 aa).

2 disordered regions span residues 1–56 and 69–92; these read MYTP…RPAS and QNSQ…PSNS. A compositionally biased stretch (low complexity) spans 14-35; sequence APTSSMTSNSSSASNANTTSSS. Over residues 36–49 the composition is skewed to polar residues; the sequence is GINPRNRASGTPSN. At serine 206 the chain carries Phosphoserine. Glycyl lysine isopeptide (Lys-Gly) (interchain with G-Cter in ubiquitin) cross-links involve residues lysine 211, lysine 256, lysine 258, lysine 288, lysine 310, lysine 333, lysine 343, lysine 346, lysine 366, lysine 406, lysine 412, and lysine 423. The FHA domain occupies 295–358; sequence LVIGRYTERV…SGTFLNHQRL (64 aa). The RING-type; atypical zinc-finger motif lies at 433 to 477; that stretch reads CSICLCKIKPCQAIFISPCAHSWHFRCVRRLVMLSYPQFVCPNCR.

It belongs to the DMA1 family. UBC4-dependent autoubiquitination occurs at Lys-211, Lys-258, Lys-288, Lys-310, Lys-333, Lys-343, Lys-346, Lys-366, Lys-406, Lys-412 and Lys-423. UBC13/MMS2-dependent autoubiquitination occurs at Lys-258, Lys-310, Lys-346 and Lys-366. Lys-211, Lys-256, Lys-288, Lys-310, Lys-343, Lys-258, Lys-366 and Lys-412 are also ubiquitinated in trans by DMA1 E3 ligase in association with UBC4.

Its subcellular location is the cytoplasm. It carries out the reaction S-ubiquitinyl-[E2 ubiquitin-conjugating enzyme]-L-cysteine + [acceptor protein]-L-lysine = [E2 ubiquitin-conjugating enzyme]-L-cysteine + N(6)-ubiquitinyl-[acceptor protein]-L-lysine.. Its function is as follows. E3 ubiquitin-protein ligase which functions in cell cycle retarding in conjunction with the UBC4 and UBC13/MMS2 complex, 2 E2 ubiquitin conjugating enzymes. Involved in nutritional control of the cell cycle. Required for proper spindle positioning, likely regulating septin ring deposition at the bud neck. This is E3 ubiquitin-protein ligase DMA2 (DMA2) from Saccharomyces cerevisiae (strain YJM789) (Baker's yeast).